A 93-amino-acid chain; its full sequence is C-C motif chemokine 14 (93 aa).

The signal sequence occupies residues 1-19; sequence MKISVAAIPFFLLITIALG. A glycan (O-linked (GalNAc...) serine; partial) is linked at S26. Cystine bridges form between C35/C59 and C36/C75.

The protein belongs to the intercrine beta (chemokine CC) family. In terms of processing, the N-terminal processed forms HCC-1(3-74), HCC-1(4-74) and HCC-1(9-74) are produced in small amounts by proteolytic cleavage after secretion in blood. HCC-1(1-74), but not HCC-1(3-74) and HCC-1(4-74), is partially O-glycosylated; the O-linked glycan consists of one Gal-GalNAc disaccharide, further modified by two N-acetylneuraminic acids. In terms of tissue distribution, expressed constitutively in several normal tissues: spleen, liver, skeletal and heart muscle, gut, and bone marrow, present at high concentrations (1-80 nM) in plasma.

It is found in the secreted. In terms of biological role, has weak activities on human monocytes and acts via receptors that also recognize MIP-1 alpha. It induces intracellular Ca(2+) changes and enzyme release, but no chemotaxis, at concentrations of 100-1,000 nM, and is inactive on T-lymphocytes, neutrophils, and eosinophil leukocytes. Enhances the proliferation of CD34 myeloid progenitor cells. The processed form HCC-1(9-74) is a chemotactic factor that attracts monocytes, eosinophils, and T-cells and is a ligand for CCR1, CCR3 and CCR5. This Homo sapiens (Human) protein is C-C motif chemokine 14 (CCL14).